The chain runs to 447 residues: Kynurenine 3-monooxygenase (447 aa).

This sequence belongs to the aromatic-ring hydroxylase family. KMO subfamily. FAD serves as cofactor.

It catalyses the reaction L-kynurenine + NADPH + O2 + H(+) = 3-hydroxy-L-kynurenine + NADP(+) + H2O. The protein operates within cofactor biosynthesis; NAD(+) biosynthesis; quinolinate from L-kynurenine: step 1/3. In terms of biological role, catalyzes the hydroxylation of L-kynurenine (L-Kyn) to form 3-hydroxy-L-kynurenine (L-3OHKyn). Required for synthesis of quinolinic acid. The protein is Kynurenine 3-monooxygenase of Christiangramia forsetii (strain DSM 17595 / CGMCC 1.15422 / KT0803) (Gramella forsetii).